Consider the following 303-residue polypeptide: MYYGFDIGGTKIALGVFDSGRQLQWEKRVPTPRDSYDAFLDAVCELVAEADQRFGCKGSVGIGIPGMPETEDGTLYAANVPAASGKPLRADLSARLDRDVRLDNDANCFALSEAWDDEFTQYPLVMGLILGTGVGGGLIFNGKPITGKSYITGEFGHMRLPVDALTMMGLDFPLRRCGCGQIGCIENYLSGRGFAWLWQHYYHQPLQAPEIIALWEEGDERAQAHVDRYLDLLAVCLGNILTIVDPDLVVIGGGLSNFTAITTQLADRLPRHLLPVARVPRIERARHGDAGGMRGAAFLHLSD.

Residues 4–11 (GFDIGGTK) and 133–140 (GVGGGLIF) contribute to the ATP site. 4 residues coordinate Zn(2+): His157, Cys177, Cys179, and Cys184.

Belongs to the ROK (NagC/XylR) family. NagK subfamily.

It catalyses the reaction N-acetyl-D-glucosamine + ATP = N-acetyl-D-glucosamine 6-phosphate + ADP + H(+). It participates in cell wall biogenesis; peptidoglycan recycling. Catalyzes the phosphorylation of N-acetyl-D-glucosamine (GlcNAc) derived from cell-wall degradation, yielding GlcNAc-6-P. This Escherichia fergusonii (strain ATCC 35469 / DSM 13698 / CCUG 18766 / IAM 14443 / JCM 21226 / LMG 7866 / NBRC 102419 / NCTC 12128 / CDC 0568-73) protein is N-acetyl-D-glucosamine kinase.